A 291-amino-acid polypeptide reads, in one-letter code: ATP synthase gamma chain (291 aa).

The protein belongs to the ATPase gamma chain family. In terms of assembly, F-type ATPases have 2 components, CF(1) - the catalytic core - and CF(0) - the membrane proton channel. CF(1) has five subunits: alpha(3), beta(3), gamma(1), delta(1), epsilon(1). CF(0) has three main subunits: a, b and c.

The protein resides in the cell inner membrane. Produces ATP from ADP in the presence of a proton gradient across the membrane. The gamma chain is believed to be important in regulating ATPase activity and the flow of protons through the CF(0) complex. The chain is ATP synthase gamma chain from Sphingopyxis alaskensis (strain DSM 13593 / LMG 18877 / RB2256) (Sphingomonas alaskensis).